A 130-amino-acid chain; its full sequence is Histidine triad nucleotide-binding protein 1 (130 aa).

Residues 22 to 130 form the HIT domain; sequence LFGKIIRKEI…GGRQLQWPPG (109 aa). The Histidine triad motif signature appears at 114 to 118; sequence HLHLH.

This Caenorhabditis elegans protein is Histidine triad nucleotide-binding protein 1 (hint-1).